A 342-amino-acid chain; its full sequence is Isopentenyl-diphosphate delta-isomerase (342 aa).

Arginine 11–lysine 12 provides a ligand contact to substrate. FMN is bound by residues serine 68, serine 69–threonine 71, serine 99, and asparagine 127. Residue serine 99–arginine 101 coordinates substrate. Glutamine 162 contributes to the substrate binding site. Residue glutamate 163 participates in Mg(2+) binding. FMN is bound by residues lysine 194, threonine 224, glycine 274–lysine 276, and alanine 295–glycine 296.

This sequence belongs to the IPP isomerase type 2 family. As to quaternary structure, homooctamer. Dimer of tetramers. The cofactor is FMN. It depends on NADPH as a cofactor. Requires Mg(2+) as cofactor.

The protein resides in the cytoplasm. It catalyses the reaction isopentenyl diphosphate = dimethylallyl diphosphate. Its function is as follows. Involved in the biosynthesis of isoprenoids. Catalyzes the 1,3-allylic rearrangement of the homoallylic substrate isopentenyl (IPP) to its allylic isomer, dimethylallyl diphosphate (DMAPP). This Rickettsia conorii (strain ATCC VR-613 / Malish 7) protein is Isopentenyl-diphosphate delta-isomerase.